The following is a 189-amino-acid chain: Elongation factor P (189 aa).

An N6-(3,6-diaminohexanoyl)-5-hydroxylysine modification is found at lysine 34.

It belongs to the elongation factor P family. In terms of processing, may be beta-lysylated on the epsilon-amino group of Lys-34 by the combined action of EpmA and EpmB, and then hydroxylated on the C5 position of the same residue by EpmC (if this protein is present). Lysylation is critical for the stimulatory effect of EF-P on peptide-bond formation. The lysylation moiety may extend toward the peptidyltransferase center and stabilize the terminal 3-CCA end of the tRNA. Hydroxylation of the C5 position on Lys-34 may allow additional potential stabilizing hydrogen-bond interactions with the P-tRNA.

It is found in the cytoplasm. The protein operates within protein biosynthesis; polypeptide chain elongation. Involved in peptide bond synthesis. Alleviates ribosome stalling that occurs when 3 or more consecutive Pro residues or the sequence PPG is present in a protein, possibly by augmenting the peptidyl transferase activity of the ribosome. Modification of Lys-34 is required for alleviation. The protein is Elongation factor P of Legionella pneumophila (strain Paris).